The primary structure comprises 83 residues: Hainantoxin-III 11 (83 aa).

A signal peptide spans Met1–Ala21. Residues Ser22 to Arg48 constitute a propeptide that is removed on maturation. 3 cysteine pairs are disulfide-bonded: Cys50–Cys65, Cys57–Cys70, and Cys64–Cys77. Residue Leu81 is modified to Leucine amide.

The protein belongs to the neurotoxin 10 (Hwtx-1) family. 15 (Hntx-3) subfamily. In terms of assembly, monomer. In terms of tissue distribution, expressed by the venom gland.

It is found in the secreted. Selective antagonist of neuronal tetrodotoxin (TTX)-sensitive voltage-gated sodium channels (IC(50)=1270 nM on Nav1.1/SCN1A, 270 nM on Nav1.2/SCN2A, 491 nM on Nav1.3/SCN3A and 232 nM on Nav1.7/SCN9A). This toxin suppress Nav1.7 current amplitude without significantly altering the activation, inactivation, and repriming kinetics. Short extreme depolarizations partially activate the toxin-bound channel, indicating voltage-dependent inhibition of this toxin. This toxin increases the deactivation of the Nav1.7 current after extreme depolarizations. The toxin-Nav1.7 complex is gradually dissociated upon prolonged strong depolarizations in a voltage-dependent manner, and the unbound toxin rebinds to Nav1.7 after a long repolarization. Moreover, analysis of chimeric channels showed that the DIIS3-S4 linker is critical for toxin binding to Nav1.7. These data are consistent with this toxin interacting with Nav1.7 site 4 and trapping the domain II voltage sensor in the closed state. This is Hainantoxin-III 11 from Cyriopagopus hainanus (Chinese bird spider).